A 238-amino-acid chain; its full sequence is Ribonuclease 3 (238 aa).

In terms of domain architecture, RNase III spans 10 to 139 (FKQFQEQTGI…FIGALYLDQG (130 aa)). Position 52 (glutamate 52) interacts with Mg(2+). Aspartate 56 is a catalytic residue. Mg(2+)-binding residues include aspartate 125 and glutamate 128. Glutamate 128 is a catalytic residue. Residues 165-234 (DYKSQLQEFV…AQMALAKLKQ (70 aa)) enclose the DRBM domain.

It belongs to the ribonuclease III family. In terms of assembly, homodimer. Mg(2+) serves as cofactor.

The protein resides in the cytoplasm. It catalyses the reaction Endonucleolytic cleavage to 5'-phosphomonoester.. Functionally, digests double-stranded RNA. Involved in the processing of primary rRNA transcript to yield the immediate precursors to the large and small rRNAs (23S and 16S). Processes some mRNAs, and tRNAs when they are encoded in the rRNA operon. Processes pre-crRNA and tracrRNA of type II CRISPR loci if present in the organism. The sequence is that of Ribonuclease 3 from Anoxybacillus flavithermus (strain DSM 21510 / WK1).